Here is a 571-residue protein sequence, read N- to C-terminus: Proline--tRNA ligase (571 aa).

It belongs to the class-II aminoacyl-tRNA synthetase family. ProS type 1 subfamily. Homodimer.

The protein resides in the cytoplasm. It catalyses the reaction tRNA(Pro) + L-proline + ATP = L-prolyl-tRNA(Pro) + AMP + diphosphate. Catalyzes the attachment of proline to tRNA(Pro) in a two-step reaction: proline is first activated by ATP to form Pro-AMP and then transferred to the acceptor end of tRNA(Pro). As ProRS can inadvertently accommodate and process non-cognate amino acids such as alanine and cysteine, to avoid such errors it has two additional distinct editing activities against alanine. One activity is designated as 'pretransfer' editing and involves the tRNA(Pro)-independent hydrolysis of activated Ala-AMP. The other activity is designated 'posttransfer' editing and involves deacylation of mischarged Ala-tRNA(Pro). The misacylated Cys-tRNA(Pro) is not edited by ProRS. This Photobacterium profundum (strain SS9) protein is Proline--tRNA ligase.